Reading from the N-terminus, the 366-residue chain is MWLEKIDIQHFRNYSEASVSFSPHLNIFLGRNAQGKTNILEAIYFLALTRSHRTHLDKELIQFQQNSLKLNGIVHRHSGNLPLEINLSNKGRVTKVNYLKQAKLSDYIGHMTVVLFAPEDLQLVKGSPSLRRKFIDIDLGQIKPVYLSDLSNYNHVLKQRNAYLKSTDKVDINFLSVLDEQLADFGARVIKHRLEFIKQLEEEADGHHSILSNQIERLKISYESNIPIQNSKDIREAFLTILNQNHKRDIFKKNTGVGPHRDDLKFYINDMNASFGSQGQQRSLILSLKMAEIALIKKVTEEFPILLLDDVMSELDNHRQLKLLESIDEEVQTFMTTTSLDHLSNLPPNLKTFLVKNGTIYEKQVD.

30-37 (GRNAQGKT) contributes to the ATP binding site.

Belongs to the RecF family.

Its subcellular location is the cytoplasm. In terms of biological role, the RecF protein is involved in DNA metabolism; it is required for DNA replication and normal SOS inducibility. RecF binds preferentially to single-stranded, linear DNA. It also seems to bind ATP. This chain is DNA replication and repair protein RecF, found in Streptococcus thermophilus (strain ATCC BAA-250 / LMG 18311).